Reading from the N-terminus, the 617-residue chain is Probable translation initiation factor IF-2 (617 aa).

The tr-type G domain occupies 14-231; the sequence is LRQPIVVVLG…VLAGLTQTYL (218 aa). The G1 stretch occupies residues 23–30; that stretch reads GHVDHGKT. 23–30 is a GTP binding site; the sequence is GHVDHGKT. Residues 48–52 form a G2 region; the sequence is GITQH. Positions 87–90 are G3; it reads DTPG. Residues 87-91 and 141-144 contribute to the GTP site; these read DTPGH and NKID. The G4 stretch occupies residues 141–144; that stretch reads NKID. The G5 stretch occupies residues 209–211; sequence SAR.

The protein belongs to the TRAFAC class translation factor GTPase superfamily. Classic translation factor GTPase family. IF-2 subfamily.

In terms of biological role, function in general translation initiation by promoting the binding of the formylmethionine-tRNA to ribosomes. Seems to function along with eIF-2. The sequence is that of Probable translation initiation factor IF-2 (infB) from Aeropyrum pernix (strain ATCC 700893 / DSM 11879 / JCM 9820 / NBRC 100138 / K1).